A 169-amino-acid polypeptide reads, in one-letter code: Glycine-rich RNA-binding protein 10 (169 aa).

The RRM domain occupies 6–84 (YRCFVGGLAW…RTITVNEAQS (79 aa)). 2 disordered regions span residues 80 to 101 (NEAQSRGGGGGGGRGGGGYGGR) and 121 to 169 (GYGS…GGGW). Over residues 85–101 (RGGGGGGGRGGGGYGGR) the composition is skewed to gly residues.

As to expression, expressed only in roots and stems.

Possibly has a role in RNA transcription or processing during stress. This is Glycine-rich RNA-binding protein 10 (GRP10) from Brassica napus (Rape).